The chain runs to 153 residues: UPF0260 protein YcgN (153 aa).

The protein belongs to the UPF0260 family.

This Shigella flexneri serotype 5b (strain 8401) protein is UPF0260 protein YcgN.